A 107-amino-acid polypeptide reads, in one-letter code: Ferredoxin (107 aa).

4Fe-4S ferredoxin-type domains are found at residues 8–37 (ERVV…LDEN) and 38–67 (GKSR…KASE). The [4Fe-4S] cluster site is built by C17, C20, and C23. Positions 27, 47, and 53 each coordinate [3Fe-4S] cluster. C57 is a binding site for [4Fe-4S] cluster.

In terms of assembly, monomer. [4Fe-4S] cluster serves as cofactor. Requires [3Fe-4S] cluster as cofactor. In terms of processing, the N-terminus is blocked.

In terms of biological role, ferredoxins are iron-sulfur proteins that transfer electrons in a wide variety of metabolic reactions. This Pyrobaculum islandicum (strain DSM 4184 / JCM 9189 / GEO3) protein is Ferredoxin.